A 275-amino-acid chain; its full sequence is 3-methyl-2-oxobutanoate hydroxymethyltransferase (275 aa).

2 residues coordinate Mg(2+): D49 and D88. 3-methyl-2-oxobutanoate is bound by residues 49–50, D88, and K118; that span reads DS. Residue E120 participates in Mg(2+) binding. The active-site Proton acceptor is the E187.

This sequence belongs to the PanB family. As to quaternary structure, homodecamer; pentamer of dimers. Requires Mg(2+) as cofactor.

It localises to the cytoplasm. It catalyses the reaction 3-methyl-2-oxobutanoate + (6R)-5,10-methylene-5,6,7,8-tetrahydrofolate + H2O = 2-dehydropantoate + (6S)-5,6,7,8-tetrahydrofolate. The protein operates within cofactor biosynthesis; (R)-pantothenate biosynthesis; (R)-pantoate from 3-methyl-2-oxobutanoate: step 1/2. Functionally, catalyzes the reversible reaction in which hydroxymethyl group from 5,10-methylenetetrahydrofolate is transferred onto alpha-ketoisovalerate to form ketopantoate. In Brucella melitensis biotype 1 (strain ATCC 23456 / CCUG 17765 / NCTC 10094 / 16M), this protein is 3-methyl-2-oxobutanoate hydroxymethyltransferase.